We begin with the raw amino-acid sequence, 611 residues long: DNA mismatch repair protein MutL (611 aa).

This sequence belongs to the DNA mismatch repair MutL/HexB family.

In terms of biological role, this protein is involved in the repair of mismatches in DNA. It is required for dam-dependent methyl-directed DNA mismatch repair. May act as a 'molecular matchmaker', a protein that promotes the formation of a stable complex between two or more DNA-binding proteins in an ATP-dependent manner without itself being part of a final effector complex. The polypeptide is DNA mismatch repair protein MutL (Bartonella bacilliformis (strain ATCC 35685 / KC583 / Herrer 020/F12,63)).